A 443-amino-acid polypeptide reads, in one-letter code: Glutamine synthetase (443 aa).

The region spanning N16–G101 is the GS beta-grasp domain. The GS catalytic domain occupies P108–Y443. 2 residues coordinate Mg(2+): E131 and E133. An ATP-binding site is contributed by E183. 2 residues coordinate Mg(2+): E188 and E195. Residues N239–G240 and G240 each bind L-glutamate. H244 lines the Mg(2+) pocket. S248 lines the ATP pocket. Positions 297, 303, and 315 each coordinate L-glutamate. Residues R315 and R320 each contribute to the ATP site. E332 is a binding site for Mg(2+). Position 334 (R334) interacts with L-glutamate.

The protein belongs to the glutamine synthetase family. As to quaternary structure, oligomer of 12 subunits arranged in the form of two hexagons. In its feedback-inhibited form, interacts with TnrA in order to block its DNA-binding activity. Requires Mg(2+) as cofactor.

It localises to the cytoplasm. It carries out the reaction L-glutamate + NH4(+) + ATP = L-glutamine + ADP + phosphate + H(+). Inhibited by glutamine. Its function is as follows. Glutamine synthetase (GS) is an unusual multitasking protein that functions as an enzyme, a transcription coregulator, and a chaperone in ammonium assimilation and in the regulation of genes involved in nitrogen metabolism. It catalyzes the ATP-dependent biosynthesis of glutamine from glutamate and ammonia. Feedback-inhibited GlnA also interacts with and regulates the activity of the transcriptional regulator TnrA. During nitrogen limitation, TnrA is in its DNA-binding active state and turns on the transcription of genes required for nitrogen assimilation. Under conditions of nitrogen excess, feedback-inhibited GlnA forms a stable complex with TnrA, which inhibits its DNA-binding activity. In contrast, feedback-inhibited GlnA acts as a chaperone to stabilize the DNA-binding activity of GlnR, which represses the transcription of nitrogen assimilation genes. This is Glutamine synthetase from Clostridium saccharobutylicum.